A 611-amino-acid polypeptide reads, in one-letter code: tRNA uridine 5-carboxymethylaminomethyl modification enzyme MnmG (611 aa).

Gly14–Gly19 is an FAD binding site. Position 274–288 (Gly274–Phe288) interacts with NAD(+).

This sequence belongs to the MnmG family. As to quaternary structure, homodimer. Heterotetramer of two MnmE and two MnmG subunits. Requires FAD as cofactor.

Its subcellular location is the cytoplasm. Its function is as follows. NAD-binding protein involved in the addition of a carboxymethylaminomethyl (cmnm) group at the wobble position (U34) of certain tRNAs, forming tRNA-cmnm(5)s(2)U34. The polypeptide is tRNA uridine 5-carboxymethylaminomethyl modification enzyme MnmG (Chlamydia caviae (strain ATCC VR-813 / DSM 19441 / 03DC25 / GPIC) (Chlamydophila caviae)).